The following is a 289-amino-acid chain: Protoheme IX farnesyltransferase (289 aa).

The next 9 helical transmembrane spans lie at 13-33 (LIKP…LYLA), 40-60 (VFLI…SFIF), 85-105 (ISIP…FYML), 111-131 (LLTA…YTIF), 139-159 (NIVI…AAIG), 168-188 (ILFT…AIFL), 212-232 (SIFF…FLEP), 234-254 (MGLL…ILSY), and 269-289 (FLFS…DHMI).

Belongs to the UbiA prenyltransferase family. Protoheme IX farnesyltransferase subfamily.

Its subcellular location is the cell inner membrane. The enzyme catalyses heme b + (2E,6E)-farnesyl diphosphate + H2O = Fe(II)-heme o + diphosphate. It participates in porphyrin-containing compound metabolism; heme O biosynthesis; heme O from protoheme: step 1/1. Functionally, converts heme B (protoheme IX) to heme O by substitution of the vinyl group on carbon 2 of heme B porphyrin ring with a hydroxyethyl farnesyl side group. The protein is Protoheme IX farnesyltransferase of Leptospira borgpetersenii serovar Hardjo-bovis (strain JB197).